An 86-amino-acid polypeptide reads, in one-letter code: Mu-theraphotoxin-Cg2a 3 (86 aa).

Residues 1-21 (MKVSVVITLAVLGVMFVWASA) form the signal peptide. The propeptide occupies 22–50 (AELKERGSDQRDSPAWIKSMERIFQSEER). 3 cysteine pairs are disulfide-bonded: C52/C66, C59/C71, and C65/C78. F84 bears the Phenylalanine amide mark.

It belongs to the neurotoxin 10 (Hwtx-1) family. 37 (Jztx-31) subfamily. As to expression, expressed by the venom gland.

It localises to the secreted. In terms of biological role, inhibits both peak current and fast inactivation of voltage-gated sodium channels (Nav) channels. Inhibits the inactivation of Nav on DRG neurons (EC(50)=1.77 uM) and peak current of cardiac myocytes (IC(50)=0.90 uM). The chain is Mu-theraphotoxin-Cg2a 3 from Chilobrachys guangxiensis (Chinese earth tiger tarantula).